A 34-amino-acid polypeptide reads, in one-letter code: Potassium channel toxin alpha-KTx 6.3 (34 aa).

Cystine bridges form between Cys-3-Cys-24, Cys-9-Cys-29, Cys-13-Cys-31, and Cys-19-Cys-34. Cys-34 is modified (cysteine amide).

The protein belongs to the short scorpion toxin superfamily. Potassium channel inhibitor family. Alpha-KTx 06 subfamily. In terms of processing, amidated. The amidated toxin shows 5-fold more affinity for Kv1.3/KCNA3 than the synthetic carboxylated form. In terms of tissue distribution, expressed by the venom gland.

The protein localises to the secreted. In terms of biological role, potently blocks voltage-gated potassium channels Kv1.1/KCNA1 (IC(50)=7-11 nM) and Kv1.3/KCNA3 (IC(50)=11-29 pM). Also mildly blocks intermediate (IK) conductance calcium-activated potassium channels (KCa3.1/KCNN4) and ERG1/Kv11.1/KCNH2. Shows ability to suppress proliferation of lymphocytes, which are known to be sensitive to Kv1.3/KCNA3 homotetrameric channel block. The polypeptide is Potassium channel toxin alpha-KTx 6.3 (Heterometrus spinifer (Asia giant forest scorpion)).